The sequence spans 339 residues: UDP-N-acetylenolpyruvoylglucosamine reductase (339 aa).

In terms of domain architecture, FAD-binding PCMH-type spans 19 to 189; it reads VDVQARLFAQ…LRVRFKLSRE (171 aa). The active site involves R166. Catalysis depends on S239, which acts as the Proton donor. The active site involves E335.

It belongs to the MurB family. FAD is required as a cofactor.

It is found in the cytoplasm. It catalyses the reaction UDP-N-acetyl-alpha-D-muramate + NADP(+) = UDP-N-acetyl-3-O-(1-carboxyvinyl)-alpha-D-glucosamine + NADPH + H(+). It participates in cell wall biogenesis; peptidoglycan biosynthesis. Functionally, cell wall formation. The protein is UDP-N-acetylenolpyruvoylglucosamine reductase of Pseudomonas syringae pv. tomato (strain ATCC BAA-871 / DC3000).